The chain runs to 1881 residues: Kinesin-like protein KIF26A (1881 aa).

3 disordered regions span residues 20-66 (PARE…AGGG), 145-193 (PASH…PPGP), and 309-330 (ASKR…STYP). At Ser30 the chain carries Phosphoserine. The Kinesin motor domain occupies 364-718 (KVKVMLRIWP…VQLAARIHRL (355 aa)). Position 462–469 (462–469 (GHMSLGKS)) interacts with ATP. Disordered stretches follow at residues 718–778 (LRRK…SSEQ), 794–827 (SDRE…RDAD), 846–982 (GSEA…QAAL), 1078–1104 (YTSQ…GSPA), 1118–1266 (LSES…PRLP), 1328–1425 (SGSL…PYRP), 1442–1633 (SKVR…SGEL), and 1652–1698 (YESM…TGLQ). Basic residues predominate over residues 742–751 (RRPPHLRPFH). The segment covering 818 to 827 (RPSEGPRDAD) has biased composition (basic and acidic residues). Positions 905–915 (SDPSKTGTQSE) are enriched in polar residues. Residues 940-950 (LPSPAPPPPRQ) show a composition bias toward pro residues. The span at 1084–1095 (EGPGDPGEFPEG) shows a compositional bias: low complexity. The span at 1151-1162 (EESKVRSSECGR) shows a compositional bias: basic and acidic residues. Residue Ser1257 is modified to Phosphoserine. Low complexity predominate over residues 1328–1353 (SGSLKTTSGSKKSVSPKGAFFPRPSG). The segment covering 1366 to 1378 (LEQSTALTPTQAL) has biased composition (polar residues). A compositionally biased stretch (basic and acidic residues) spans 1390–1399 (RGEEEARPSG). The span at 1400-1412 (RSDSSVPKATSSL) shows a compositional bias: polar residues. Low complexity-rich tracts occupy residues 1477 to 1489 (PAKG…PPAG), 1524 to 1537 (PGPR…PGIG), and 1575 to 1587 (WGST…NDSG). The segment covering 1616 to 1629 (RYSSGHGSDNSSVL) has biased composition (polar residues). Ser1654 carries the phosphoserine modification. The segment covering 1664–1675 (SASSAPDSMSES) has biased composition (low complexity). The span at 1685 to 1698 (RSLKSPKKRATGLQ) shows a compositional bias: basic residues. A coiled-coil region spans residues 1780-1812 (LRLAERRQQRLQEVQAKRDHLCEELAETQGRLM).

Belongs to the TRAFAC class myosin-kinesin ATPase superfamily. Kinesin family. KIF26 subfamily. In terms of assembly, interacts with GRB2 (via SH2 domain). Expressed in several neuronal populations.

It is found in the cytoplasm. The protein resides in the cytoskeleton. Atypical kinesin that plays a key role in enteric neuron development. Acts by repressing a cell growth signaling pathway in the enteric nervous system development, possibly via its interaction with GRB2 that prevents GRB2-binding to SHC, thereby attenating the GDNF-Ret signaling. Binds to microtubules but lacks microtubule-based motility due to the absence of ATPase activity. Plays a critical role in cerebral cortical development. It probably acts as a microtubule stabilizer that regulates neurite growth and radial migration of cortical excitatory neurons. This Mus musculus (Mouse) protein is Kinesin-like protein KIF26A (Kif26a).